Here is a 406-residue protein sequence, read N- to C-terminus: Putative odorant receptor 65b (406 aa).

Residues 1–55 lie on the Cytoplasmic side of the membrane; it reads MDIQRFLKFYKVGWKTYRDPLMEASHSSIYYWREQMKAMALFTTTEERLLPYRSK. The chain crosses the membrane as a helical span at residues 56-76; it reads WHTLVYIQMVIFFASMSFGLT. Over 77–88 the chain is Extracellular; the sequence is ESMGDHVQMGRD. The chain crosses the membrane as a helical span at residues 89–109; sequence LAFILGAFFIIFKTYYFCWYG. Residues 110 to 144 are Cytoplasmic-facing; the sequence is DELDQVISDLDALHPWAQKGPNPVEYQTGKRWYFV. A helical transmembrane segment spans residues 145–165; the sequence is MAFFLATSWSFFLCILLLLLI. Topologically, residues 166 to 218 are extracellular; sequence TSPMWVHQQNLPFHAAFPFQWHEKSLHPISHAIIYLFQSYFAVYCLTWLLCIE. The chain crosses the membrane as a helical span at residues 219-239; it reads GLSICIYAEITFGIEVLCLEL. Residues 240–275 lie on the Cytoplasmic side of the membrane; it reads RQIHRHNYGLQELRMETNRLVKLHQKIVEILDRTND. Residues 276-296 form a helical membrane-spanning segment; it reads VFHGTLIMQMGVNFSLVSLSV. The Extracellular segment spans residues 297–307; that stretch reads LEAVEARKDPK. The chain crosses the membrane as a helical span at residues 308 to 328; that stretch reads VVAQFAVLMLLALGHLSMWSY. Residues 329-381 are Cytoplasmic-facing; it reads CGDQLSQKSLQISEAAYEAYDPTKGSKDVYRDLCVIIRRGQDPLIMRASPFPS. Residues 382–402 traverse the membrane as a helical segment; the sequence is FNLINYSAILNQCYGILTFLL. Residues 403 to 406 are Extracellular-facing; the sequence is KTLD.

It belongs to the insect chemoreceptor superfamily. Heteromeric odorant receptor channel (TC 1.A.69) family. Or49a subfamily. As to quaternary structure, interacts with Orco. Complexes exist early in the endomembrane system in olfactory sensory neurons (OSNs), coupling these complexes to the conserved ciliary trafficking pathway.

Its subcellular location is the cell membrane. Its function is as follows. Odorant receptor which mediates acceptance or avoidance behavior, depending on its substrates. The odorant receptor repertoire encodes a large collection of odor stimuli that vary widely in identity, intensity, and duration. May form a complex with Orco to form odorant-sensing units, providing sensitive and prolonged odorant signaling and calcium permeability. The sequence is that of Putative odorant receptor 65b (Or65b) from Drosophila melanogaster (Fruit fly).